Consider the following 288-residue polypeptide: tRNA dimethylallyltransferase (288 aa).

An ATP-binding site is contributed by 17-24 (GPTASGKT). 19-24 (TASGKT) contacts substrate.

It belongs to the IPP transferase family. In terms of assembly, monomer. The cofactor is Mg(2+).

The catalysed reaction is adenosine(37) in tRNA + dimethylallyl diphosphate = N(6)-dimethylallyladenosine(37) in tRNA + diphosphate. In terms of biological role, catalyzes the transfer of a dimethylallyl group onto the adenine at position 37 in tRNAs that read codons beginning with uridine, leading to the formation of N6-(dimethylallyl)adenosine (i(6)A). The sequence is that of tRNA dimethylallyltransferase from Jannaschia sp. (strain CCS1).